The following is a 211-amino-acid chain: Large ribosomal subunit protein uL3 (211 aa).

N5-methylglutamine is present on glutamine 150.

The protein belongs to the universal ribosomal protein uL3 family. As to quaternary structure, part of the 50S ribosomal subunit. Forms a cluster with proteins L14 and L19. Post-translationally, methylated by PrmB.

Its function is as follows. One of the primary rRNA binding proteins, it binds directly near the 3'-end of the 23S rRNA, where it nucleates assembly of the 50S subunit. This is Large ribosomal subunit protein uL3 from Stutzerimonas stutzeri (strain A1501) (Pseudomonas stutzeri).